We begin with the raw amino-acid sequence, 488 residues long: ATP synthase subunit beta (488 aa).

164-171 (GGAGVGKT) is a binding site for ATP.

It belongs to the ATPase alpha/beta chains family. As to quaternary structure, F-type ATPases have 2 components, CF(1) - the catalytic core - and CF(0) - the membrane proton channel. CF(1) has five subunits: alpha(3), beta(3), gamma(1), delta(1), epsilon(1). CF(0) has four main subunits: a(1), b(1), b'(1) and c(9-12).

The protein resides in the cellular thylakoid membrane. The catalysed reaction is ATP + H2O + 4 H(+)(in) = ADP + phosphate + 5 H(+)(out). In terms of biological role, produces ATP from ADP in the presence of a proton gradient across the membrane. The catalytic sites are hosted primarily by the beta subunits. The sequence is that of ATP synthase subunit beta from Prochlorococcus marinus (strain SARG / CCMP1375 / SS120).